The sequence spans 943 residues: Calcium-activated chloride channel regulator 2 (943 aa).

The N-terminal stretch at 1-31 (MTQRSIAGPICNLKFVTLLVALSSELPFLGA) is a signal peptide. Residues 32-901 (GVQLQDNGYN…SDPVPARDYL (870 aa)) lie on the Extracellular side of the membrane. The metalloprotease domain stretch occupies residues 54 to 205 (NQNLISNIKE…CSSDITGIFV (152 aa)). N-linked (GlcNAc...) asparagine glycans are attached at residues Asn-74 and Asn-150. His-164 contacts Zn(2+). Residue Glu-165 is part of the active site. The Zn(2+) site is built by His-168 and Asp-175. N-linked (GlcNAc...) asparagine glycosylation occurs at Asn-231. The region spanning 311 to 483 (VVCLVLDVSS…NSMIDAFSRI (173 aa)) is the VWFA domain. Residues Asn-522 and Asn-822 are each glycosylated (N-linked (GlcNAc...) asparagine). The helical transmembrane segment at 902–922 (ILKGVLTAMGLIGIICLIIVV) threads the bilayer. The Cytoplasmic segment spans residues 923-943 (THHTLSRKKRADKKENGTKLL).

It belongs to the CLCR family. In terms of processing, the 141 kDa mature form is autoproteolytically cleaved by the metalloprotease domain, producing a 109 kDa form and a 35 kDa form. The cleavage is necessary for calcium-activated chloride channel (CaCC) activation activity. Post-translationally, N-glycosylated. In terms of tissue distribution, expressed in cornea, skin, vagina, esophagus, and larynx (at protein level). Expressed in trachea and mammary gland. Weakly expressed in testis and kidney. Highly expressed in corneal epithelium, colon and trachea. Moderately expressed in brain, urogenital organs, bladder, uterus and prostate. Highly expressed in tissues containing stratified epithelium including cornea, esophagus, larynx, skin and vagina than those tissues which contain only epithelial monolayers. Expressed in normal breast epithelium but not in breast cancer. Highly expressed during epithelial stratification. Expressed in endothelial cells of lung. Expressed selectively in endothelia of small pulmonary arteries, arterioles, and subpleural and interlobular venules.

The protein resides in the cell membrane. Its subcellular location is the basal cell membrane. It is found in the cell junction. It localises to the secreted. Its function is as follows. Plays a role in modulating chloride current across the plasma membrane in a calcium-dependent manner, and cell adhesion. Involved in basal cell adhesion and/or stratification of squamous epithelia. May act as a tumor suppressor in breast and colorectal cancer. Plays a key role for cell adhesion in the beginning stages of lung metastasis via the binding to ITGB4. In Homo sapiens (Human), this protein is Calcium-activated chloride channel regulator 2 (CLCA2).